The following is a 302-amino-acid chain: uncharacterized protein (302 aa).

The N-terminal stretch at 1–28 is a signal peptide; it reads MNKLTAQNLLKKSRFLKYSLLTSISVGA.

This is an uncharacterized protein from Rickettsia prowazekii (strain Madrid E).